Consider the following 71-residue polypeptide: Translation initiation factor IF-1 (71 aa).

An S1-like domain is found at 1 to 71 (MSKDDLIQFT…LTKGRVIHRH (71 aa)).

Belongs to the IF-1 family. Component of the 30S ribosomal translation pre-initiation complex which assembles on the 30S ribosome in the order IF-2 and IF-3, IF-1 and N-formylmethionyl-tRNA(fMet); mRNA recruitment can occur at any time during PIC assembly.

It is found in the cytoplasm. Its function is as follows. One of the essential components for the initiation of protein synthesis. Stabilizes the binding of IF-2 and IF-3 on the 30S subunit to which N-formylmethionyl-tRNA(fMet) subsequently binds. Helps modulate mRNA selection, yielding the 30S pre-initiation complex (PIC). Upon addition of the 50S ribosomal subunit IF-1, IF-2 and IF-3 are released leaving the mature 70S translation initiation complex. The chain is Translation initiation factor IF-1 from Rickettsia akari (strain Hartford).